An 84-amino-acid polypeptide reads, in one-letter code: Cell division topological specificity factor (84 aa).

Belongs to the MinE family.

Functionally, prevents the cell division inhibition by proteins MinC and MinD at internal division sites while permitting inhibition at polar sites. This ensures cell division at the proper site by restricting the formation of a division septum at the midpoint of the long axis of the cell. This Burkholderia cenocepacia (strain HI2424) protein is Cell division topological specificity factor.